The sequence spans 498 residues: MLYLLALVTVLAGLLHYYFTRTFNYWKKRNVAGPKPVPFFGNLKDSVLRRKPQVMVYKSIYDEFPNEKVVGIYRMTTPSVLLRDLDIIKHVLIKDFESFADRGVEFSLDGLGANIFHADGDRWRSLRNRFTPLFTSGKLKSMLPLMSQVGDRFINSIDEVSQTQPEQSIHNLVQKFTMTNIAACVFGLNLDEGMLKTLEDLDKHIFTVNYSAELDMMYPGILKKLNGSLFPKVVSKFFDNLTKNVLEMRKGTPSYQKDMIDLIQELREKKTLELSRKHENEDVKALELTDGVISAQMFIFYMAGYETSATTMTYLFYELAKNPDIQDKLIAEIDEVLSRHDGNITYECLSEMTYLSKVFDETLRKYPVADFTQRNAKTDYVFPGTDITIKKGQTIIVSTWGIQNDPKYYPNPEKFDPERFNPENVKDRHPCAYLPFSAGPRNCLGMRFAKWQSEVCIMKVLSKYRVEPSMKSSGPFKFDPMRLFALPKGGIYVNLVRR.

Cys443 serves as a coordination point for heme.

Belongs to the cytochrome P450 family. Requires heme as cofactor. In terms of tissue distribution, midgut microsome.

It is found in the endoplasmic reticulum membrane. Its subcellular location is the microsome membrane. The catalysed reaction is an organic molecule + reduced [NADPH--hemoprotein reductase] + O2 = an alcohol + oxidized [NADPH--hemoprotein reductase] + H2O + H(+). In terms of biological role, enables the insect to feed on furanocoumarin-producing plants and evolved as an adaptation for detoxification of xanthotoxin and other furanocoumarins. In Papilio polyxenes (Black swallowtail butterfly), this protein is Cytochrome P450 6B1 (CYP6B1).